The primary structure comprises 185 residues: MWKLGRGRVLLDEPPEEEDGLRGGPPPAAAAAAQAQVQGASFRGWKEVTSLFNKDDEQHLLERCKSPKSKGTNLRLKEELKAEKKSGFWDNLVLKQNIQSKKPDEIEGWEPPKLALEDISADPEDTVGGHPSWSGWEDDAKGSTKYTSLASSANSSRWSLRAAGRLVSIRRQSKGHLTDSPEEAE.

Disordered regions lie at residues 1-29 and 121-156; these read MWKL…PPAA and ADPE…ANSS.

This sequence belongs to the TDRP family. Interacts with PRM2. As to expression, expressed in spermatogenic cells, especially in spermatocytes (at protein level).

It localises to the nucleus. The protein localises to the cytoplasm. In terms of biological role, contributes to normal sperm motility, but not essential for male fertility. The protein is Testis development-related protein (TDRP) of Homo sapiens (Human).